We begin with the raw amino-acid sequence, 298 residues long: Heterogeneous nuclear ribonucleoprotein C (298 aa).

N-acetylalanine is present on A2. Glycyl lysine isopeptide (Lys-Gly) (interchain with G-Cter in SUMO2) cross-links involve residues K8, K50, K89, and K94. The RRM domain maps to 16-87 (SRVFIGNLNT…QVLDINLAAE (72 aa)). At S108 the chain carries Phosphoserine. Disordered stretches follow at residues 131 to 177 (PPPP…VKGD) and 204 to 298 (EKEQ…EDDS). The short motif at 142–148 (PSKRQRV) is the Nuclear localization signal element. Phosphoserine is present on residues S149 and S153. Residues 162-173 (SKSGQRGSSSKS) show a composition bias toward low complexity. At K163 the chain carries N6-acetyllysine; alternate. K163 participates in a covalent cross-link: Glycyl lysine isopeptide (Lys-Gly) (interchain with G-Cter in SUMO2); alternate. Residues 176–211 (GDDLQAIKKELTQIKQKVDSLLESLEKIEKEQSKQA) are a coiled coil. K209 participates in a covalent cross-link: Glycyl lysine isopeptide (Lys-Gly) (interchain with G-Cter in SUMO2). Residues S214, S216, and S217 each carry the phosphoserine modification. K222 is covalently cross-linked (Glycyl lysine isopeptide (Lys-Gly) (interchain with G-Cter in SUMO2)). Residue K225 forms a Glycyl lysine isopeptide (Lys-Gly) (interchain with G-Cter in SUMO2); alternate linkage. K225 is covalently cross-linked (Glycyl lysine isopeptide (Lys-Gly) (interchain with G-Cter in SUMO1); alternate). S226, S231, S232, and S234 each carry phosphoserine. Over residues 235-246 (VKKDETNVKMES) the composition is skewed to basic and acidic residues. Residues K236 and K237 each participate in a glycyl lysine isopeptide (Lys-Gly) (interchain with G-Cter in SUMO2) cross-link. A Glycyl lysine isopeptide (Lys-Gly) (interchain with G-Cter in SUMO2); alternate cross-link involves residue K243. K243 is covalently cross-linked (Glycyl lysine isopeptide (Lys-Gly) (interchain with G-Cter in SUMO); alternate). Phosphoserine occurs at positions 246 and 253. Residues 248–269 (AGADDSAEEGDLLDDDDNEDRG) are compositionally biased toward acidic residues. Positions 270-279 (DDQLELKDDE) are enriched in basic and acidic residues. A compositionally biased stretch (acidic residues) spans 280–298 (KEPEEGEDDRDSANGEDDS). S291 and S298 each carry phosphoserine.

It belongs to the RRM HNRPC family. RALY subfamily. Tetramer composed of 3 copies of isoform C1 and 1 copy of isoform C2. Assembly of 3 tetramers with bound pre-mRNA gives rise to a 19S complex that interacts with HNRNPA2B1 tetramers. Component of the 40S hnRNP particle. Identified in the spliceosome C complex. Interacts with IGF2BP1. Interacts with PPIA/CYPA. Post-translationally, phosphorylated on Ser-253 and Ser-291 in resting cells. Sumoylated. Sumoylation reduces affinity for mRNA. In terms of processing, ubiquitinated and degraded after nucleo-cytoplasmic transport by YWHAE.

The protein localises to the nucleus. Functionally, binds pre-mRNA and nucleates the assembly of 40S hnRNP particles. Interacts with poly-U tracts in the 3'-UTR or 5'-UTR of mRNA and modulates the stability and the level of translation of bound mRNA molecules. Single HNRNPC tetramers bind 230-240 nucleotides. Trimers of HNRNPC tetramers bind 700 nucleotides. May play a role in the early steps of spliceosome assembly and pre-mRNA splicing. N6-methyladenosine (m6A) has been shown to alter the local structure in mRNAs and long non-coding RNAs (lncRNAs) via a mechanism named 'm(6)A-switch', facilitating binding of HNRNPC, leading to regulation of mRNA splicing. This Rattus norvegicus (Rat) protein is Heterogeneous nuclear ribonucleoprotein C.